Here is a 388-residue protein sequence, read N- to C-terminus: Probable aspartic-type endopeptidase MCYG_06955 (388 aa).

Positions 1–21 are cleaved as a signal peptide; sequence MMGPFFYFTAYVSLLFAFTQA. N-linked (GlcNAc...) asparagine glycans are attached at residues asparagine 82 and asparagine 104. Positions 96–384 constitute a Peptidase A1 domain; it reads FVNEITVGND…DYDGPKIGFA (289 aa). Aspartate 112 is an active-site residue. N-linked (GlcNAc...) asparagine glycosylation is found at asparagine 209 and asparagine 261. Residue aspartate 278 is part of the active site. Residues asparagine 315 and asparagine 320 are each glycosylated (N-linked (GlcNAc...) asparagine).

It belongs to the peptidase A1 family.

Its subcellular location is the secreted. Functionally, probable aspartic-type endopeptidase which contributes to virulence. This Arthroderma otae (strain ATCC MYA-4605 / CBS 113480) (Microsporum canis) protein is Probable aspartic-type endopeptidase MCYG_06955.